Consider the following 224-residue polypeptide: Cytidylate kinase (224 aa).

14 to 22 (GPAGSGKST) contacts ATP.

It belongs to the cytidylate kinase family. Type 1 subfamily.

The protein resides in the cytoplasm. It carries out the reaction CMP + ATP = CDP + ADP. The catalysed reaction is dCMP + ATP = dCDP + ADP. The polypeptide is Cytidylate kinase (Mycoplasmoides gallisepticum (strain R(low / passage 15 / clone 2)) (Mycoplasma gallisepticum)).